Reading from the N-terminus, the 135-residue chain is ATP synthase epsilon chain (135 aa).

The protein belongs to the ATPase epsilon chain family. As to quaternary structure, F-type ATPases have 2 components, CF(1) - the catalytic core - and CF(0) - the membrane proton channel. CF(1) has five subunits: alpha(3), beta(3), gamma(1), delta(1), epsilon(1). CF(0) has three main subunits: a, b and c.

The protein localises to the cell inner membrane. In terms of biological role, produces ATP from ADP in the presence of a proton gradient across the membrane. In Chelativorans sp. (strain BNC1), this protein is ATP synthase epsilon chain.